The sequence spans 464 residues: Putative protein TIC 214 C-terminal part (464 aa).

This sequence belongs to the TIC214 family. In terms of assembly, part of the Tic complex.

It localises to the plastid. The protein localises to the chloroplast. Involved in protein precursor import into chloroplasts. May be part of an intermediate translocation complex acting as a protein-conducting channel at the inner envelope. In Marchantia polymorpha (Common liverwort), this protein is Putative protein TIC 214 C-terminal part.